A 478-amino-acid polypeptide reads, in one-letter code: Cytochrome P450 monooxygenase asqL (478 aa).

Cys-407 contacts heme.

Belongs to the cytochrome P450 family. Heme serves as cofactor.

It participates in secondary metabolite biosynthesis. Its pathway is alkaloid biosynthesis. It functions in the pathway mycotoxin biosynthesis. Its function is as follows. Cytochrome P450 monooxygenase; part of the gene cluster that mediates the biosynthesis of the aspoquinolone mycotoxins. The role of asqL within the aspoquinolone pathway has still to be determined. The first step of the pathway is catalyzed by the nonribosomal peptide synthetase asqK that condenses anthranilic acid and O-methyl-L-tyrosine to produce 4'-methoxycyclopeptin. 4'-methoxycyclopeptin is then converted to 4'-methoxydehydrocyclopeptin by the ketoglutarate-dependent dioxygenase asqJ. AsqJ also converts its first product 4'-methoxydehydrocyclopeptin to 4'-methoxycyclopenin. The following conversion of 4'-methoxycyclopenin into 4'-methoxyviridicatin is catalyzed by the cyclopenase asqI. 4'-methoxyviridicatin is the precursor of quinolone natural products, and is further converted to quinolinone B. The prenyltransferase asqH1 then catalyzes the canonical Friedel-Crafts alkylation of quinolinone B with dimethylallyl cation to yield dimethylallyl quinolone, which is subjected to FAD-dependent dehydrogenation by the FAD-linked oxidoreductase asqF to yield conjugated aryl diene. The delta(3') double bond then serves as the site of the second alkylation with DMAPP catalyzed by the prenyltransferase asqH2 to yield a carbenium ion intermediate, which can be attacked by H(2)O to yield a styrenyl quinolone containing a C3'-hydroxyprenyl chain. The FAD-dependent monooxygenase asqG performs epoxidation of the terminal C7'-C8' olefin. Finally, after dehydratation of the epoxide at C3 by asqC, the quinolone epoxide rearrangement protein asqO catalyzes an enzymatic 3-exo-tet cyclization to yield the cyclopropyl-THF ring system in aspoquinolone. The polypeptide is Cytochrome P450 monooxygenase asqL (Emericella nidulans (strain FGSC A4 / ATCC 38163 / CBS 112.46 / NRRL 194 / M139) (Aspergillus nidulans)).